We begin with the raw amino-acid sequence, 311 residues long: p-hydroxybenzoic acid efflux pump subunit AaeA (311 aa).

Residues 11–31 traverse the membrane as a helical segment; it reads IGITLLVVLLAVIAIFKVWAF.

This sequence belongs to the membrane fusion protein (MFP) (TC 8.A.1) family.

It is found in the cell inner membrane. Functionally, forms an efflux pump with AaeB. The sequence is that of p-hydroxybenzoic acid efflux pump subunit AaeA from Yersinia enterocolitica serotype O:8 / biotype 1B (strain NCTC 13174 / 8081).